A 371-amino-acid polypeptide reads, in one-letter code: UDP-N-acetylglucosamine--N-acetylmuramyl-(pentapeptide) pyrophosphoryl-undecaprenol N-acetylglucosamine transferase (371 aa).

UDP-N-acetyl-alpha-D-glucosamine is bound by residues 10 to 12 (TGG), N122, R166, S196, and Q301.

Belongs to the glycosyltransferase 28 family. MurG subfamily.

The protein resides in the cell inner membrane. The catalysed reaction is di-trans,octa-cis-undecaprenyl diphospho-N-acetyl-alpha-D-muramoyl-L-alanyl-D-glutamyl-meso-2,6-diaminopimeloyl-D-alanyl-D-alanine + UDP-N-acetyl-alpha-D-glucosamine = di-trans,octa-cis-undecaprenyl diphospho-[N-acetyl-alpha-D-glucosaminyl-(1-&gt;4)]-N-acetyl-alpha-D-muramoyl-L-alanyl-D-glutamyl-meso-2,6-diaminopimeloyl-D-alanyl-D-alanine + UDP + H(+). It participates in cell wall biogenesis; peptidoglycan biosynthesis. In terms of biological role, cell wall formation. Catalyzes the transfer of a GlcNAc subunit on undecaprenyl-pyrophosphoryl-MurNAc-pentapeptide (lipid intermediate I) to form undecaprenyl-pyrophosphoryl-MurNAc-(pentapeptide)GlcNAc (lipid intermediate II). The polypeptide is UDP-N-acetylglucosamine--N-acetylmuramyl-(pentapeptide) pyrophosphoryl-undecaprenol N-acetylglucosamine transferase (Halothermothrix orenii (strain H 168 / OCM 544 / DSM 9562)).